A 188-amino-acid chain; its full sequence is Transmembrane protein 160 (188 aa).

Residues 1–96 (MGGGWWWARV…ISFMQSDMGR (96 aa)) constitute a mitochondrion transit peptide. The interval 21–53 (SLQPPQRPRSGGARGSFAPGHGPRAGASPPPVS) is disordered. A Phosphoserine modification is found at Ser48. A run of 2 helical transmembrane segments spans residues 102–122 (FFLL…VGLA) and 135–155 (AAAG…AVGL). Residues 168 to 188 (PEDDGAASTEGPDEAGRPPPE) form a disordered region.

It belongs to the TMEM160 family. As to expression, expressed in peripheral sensory neurons of dorsal root ganglia (DRG).

It localises to the mitochondrion inner membrane. This is Transmembrane protein 160 from Mus musculus (Mouse).